Consider the following 167-residue polypeptide: NADH-quinone oxidoreductase subunit I (167 aa).

4Fe-4S ferredoxin-type domains are found at residues 59–88 (RKYK…IEAQ) and 98–127 (VRYD…EGPN). Positions 68, 71, 74, 78, 107, 110, 113, and 117 each coordinate [4Fe-4S] cluster.

Belongs to the complex I 23 kDa subunit family. In terms of assembly, NDH-1 is composed of 14 different subunits. Subunits NuoA, H, J, K, L, M, N constitute the membrane sector of the complex. It depends on [4Fe-4S] cluster as a cofactor.

Its subcellular location is the cell inner membrane. The catalysed reaction is a quinone + NADH + 5 H(+)(in) = a quinol + NAD(+) + 4 H(+)(out). NDH-1 shuttles electrons from NADH, via FMN and iron-sulfur (Fe-S) centers, to quinones in the respiratory chain. The immediate electron acceptor for the enzyme in this species is believed to be ubiquinone. Couples the redox reaction to proton translocation (for every two electrons transferred, four hydrogen ions are translocated across the cytoplasmic membrane), and thus conserves the redox energy in a proton gradient. The protein is NADH-quinone oxidoreductase subunit I of Ehrlichia canis (strain Jake).